We begin with the raw amino-acid sequence, 417 residues long: Serine protease hepsin (417 aa).

Topologically, residues methionine 1–alanine 23 are cytoplasmic. The helical; Signal-anchor for type II membrane protein transmembrane segment at glycine 24–leucine 44 threads the bilayer. The Extracellular segment spans residues arginine 45–leucine 417. The region spanning valine 54–glutamine 151 is the SRCR domain. 8 disulfides stabilise this stretch: cysteine 77/cysteine 140, cysteine 90/cysteine 150, cysteine 119/cysteine 138, cysteine 153/cysteine 277, cysteine 188/cysteine 204, cysteine 291/cysteine 359, cysteine 322/cysteine 338, and cysteine 349/cysteine 381. Asparagine 112 carries N-linked (GlcNAc...) asparagine glycosylation. The region spanning isoleucine 163–lysine 405 is the Peptidase S1 domain. Residues histidine 203 and aspartate 257 each act as charge relay system in the active site. Residue serine 353 is the Charge relay system of the active site.

This sequence belongs to the peptidase S1 family. Detected in liver and kidney.

It is found in the cell membrane. It localises to the apical cell membrane. The catalysed reaction is Cleavage after basic amino-acid residues, with Arg strongly preferred to Lys.. In terms of biological role, serine protease that cleaves extracellular substrates, and contributes to the proteolytic processing of growth factors, such as HGF and MST1/HGFL. Plays a role in cell growth and maintenance of cell morphology. Plays a role in the proteolytic processing of ACE2. Mediates the proteolytic cleavage of urinary UMOD that is required for UMOD polymerization. This is Serine protease hepsin (HPN) from Homo sapiens (Human).